A 232-amino-acid polypeptide reads, in one-letter code: Mediator of RNA polymerase II transcription subunit 18 (232 aa).

Belongs to the Mediator complex subunit 18 family. Component of the Mediator complex.

The protein resides in the nucleus. Its function is as follows. Component of the Mediator complex, a coactivator involved in the regulated transcription of nearly all RNA polymerase II-dependent genes. Mediator functions as a bridge to convey information from gene-specific regulatory proteins to the basal RNA polymerase II transcription machinery. Mediator is recruited to promoters by direct interactions with regulatory proteins and serves as a scaffold for the assembly of a functional preinitiation complex with RNA polymerase II and the general transcription factors. In Caenorhabditis elegans, this protein is Mediator of RNA polymerase II transcription subunit 18 (mdt-18).